Here is a 79-residue protein sequence, read N- to C-terminus: Acyl carrier protein (79 aa).

Positions 2 to 77 constitute a Carrier domain; that stretch reads SEIGERVKKI…DATKFLEKNA (76 aa). The residue at position 37 (Ser-37) is an O-(pantetheine 4'-phosphoryl)serine.

This sequence belongs to the acyl carrier protein (ACP) family. 4'-phosphopantetheine is transferred from CoA to a specific serine of apo-ACP by AcpS. This modification is essential for activity because fatty acids are bound in thioester linkage to the sulfhydryl of the prosthetic group.

It localises to the cytoplasm. The protein operates within lipid metabolism; fatty acid biosynthesis. Functionally, carrier of the growing fatty acid chain in fatty acid biosynthesis. This is Acyl carrier protein from Nitrobacter hamburgensis (strain DSM 10229 / NCIMB 13809 / X14).